The following is a 615-amino-acid chain: Dihydroxy-acid dehydratase (615 aa).

Residue Asp83 coordinates Mg(2+). [2Fe-2S] cluster is bound at residue Cys124. Residues Asp125 and Lys126 each coordinate Mg(2+). Lys126 is subject to N6-carboxylysine. Cys199 serves as a coordination point for [2Fe-2S] cluster. Glu495 is a binding site for Mg(2+). The active-site Proton acceptor is the Ser521.

This sequence belongs to the IlvD/Edd family. As to quaternary structure, homodimer. [2Fe-2S] cluster serves as cofactor. Requires Mg(2+) as cofactor.

The enzyme catalyses (2R)-2,3-dihydroxy-3-methylbutanoate = 3-methyl-2-oxobutanoate + H2O. It carries out the reaction (2R,3R)-2,3-dihydroxy-3-methylpentanoate = (S)-3-methyl-2-oxopentanoate + H2O. It functions in the pathway amino-acid biosynthesis; L-isoleucine biosynthesis; L-isoleucine from 2-oxobutanoate: step 3/4. Its pathway is amino-acid biosynthesis; L-valine biosynthesis; L-valine from pyruvate: step 3/4. Functionally, functions in the biosynthesis of branched-chain amino acids. Catalyzes the dehydration of (2R,3R)-2,3-dihydroxy-3-methylpentanoate (2,3-dihydroxy-3-methylvalerate) into 2-oxo-3-methylpentanoate (2-oxo-3-methylvalerate) and of (2R)-2,3-dihydroxy-3-methylbutanoate (2,3-dihydroxyisovalerate) into 2-oxo-3-methylbutanoate (2-oxoisovalerate), the penultimate precursor to L-isoleucine and L-valine, respectively. This Corynebacterium jeikeium (strain K411) protein is Dihydroxy-acid dehydratase.